We begin with the raw amino-acid sequence, 479 residues long: Ribulose bisphosphate carboxylase large chain (479 aa).

Positions 1 to 2 are excised as a propeptide; that stretch reads MS. N123 and T173 together coordinate substrate. Residue K175 is the Proton acceptor of the active site. K177 lines the substrate pocket. Mg(2+) contacts are provided by K201, D203, and E204. K201 carries the N6-carboxylysine modification. At S208 the chain carries Phosphoserine. The Proton acceptor role is filled by H294. 2 residues coordinate substrate: R295 and H327. The residue at position 330 (T330) is a Phosphothreonine. Position 379 (S379) interacts with substrate.

It belongs to the RuBisCO large chain family. Type I subfamily. Heterohexadecamer of 8 large chains and 8 small chains; disulfide-linked. The disulfide link is formed within the large subunit homodimers. Mg(2+) serves as cofactor. Post-translationally, the disulfide bond which can form in the large chain dimeric partners within the hexadecamer appears to be associated with oxidative stress and protein turnover.

Its subcellular location is the plastid. The protein localises to the chloroplast. It carries out the reaction 2 (2R)-3-phosphoglycerate + 2 H(+) = D-ribulose 1,5-bisphosphate + CO2 + H2O. The catalysed reaction is D-ribulose 1,5-bisphosphate + O2 = 2-phosphoglycolate + (2R)-3-phosphoglycerate + 2 H(+). In terms of biological role, ruBisCO catalyzes two reactions: the carboxylation of D-ribulose 1,5-bisphosphate, the primary event in carbon dioxide fixation, as well as the oxidative fragmentation of the pentose substrate in the photorespiration process. Both reactions occur simultaneously and in competition at the same active site. This Arabis hirsuta (Hairy rock-cress) protein is Ribulose bisphosphate carboxylase large chain.